The sequence spans 498 residues: ATP synthase subunit beta, chloroplastic (498 aa).

An ATP-binding site is contributed by 172–179; it reads GGAGVGKT.

It belongs to the ATPase alpha/beta chains family. In terms of assembly, F-type ATPases have 2 components, CF(1) - the catalytic core - and CF(0) - the membrane proton channel. CF(1) has five subunits: alpha(3), beta(3), gamma(1), delta(1), epsilon(1). CF(0) has four main subunits: a(1), b(1), b'(1) and c(9-12).

It is found in the plastid. The protein localises to the chloroplast thylakoid membrane. It catalyses the reaction ATP + H2O + 4 H(+)(in) = ADP + phosphate + 5 H(+)(out). Its function is as follows. Produces ATP from ADP in the presence of a proton gradient across the membrane. The catalytic sites are hosted primarily by the beta subunits. The protein is ATP synthase subunit beta, chloroplastic of Saruma henryi (Upright wild ginger).